The primary structure comprises 543 residues: MREEEIEKIRGVVRDCVSKHLYSSAIFFADKVAALTNDPSDIYMQAQALFLGRHYRRAFHLLNASKIVLRDLRFRYLAAKCLEELKEWDQCLLMLGDAKVDDDGIVYDAKDGNVIDFDKDGEDREINISSAICFLRGKAYGALQNRSQARQWYKAAIKADPLCYEALECLIESHMLTSEEESSLLSSLQFSPEDGWLSSFYSCLIKKYDKESTVELKFKKLENETSGSVSGSSMITLANNTDLLACKAEYYHQCCEYQKCFELTAALLEKDPFHLKCTLVHLAAAMELGNSNELYLMACNLVKDYPSKALSWFAVGCYYYCIKKYAEARRYFSKATGIDGSFSPARIGYGNSFAAQEEGDQAMSAYRTAARLFPGCHLPTLYIGMEYMRTHSYKLADQFFMQAKAICPSDPLVYNELGVVAYHMKEYGKAVRWFEKTLAHIPSALTESWEPTVVNLAHAYRKLRKDREAISYYERALTLSTKSLSTYSGLAYTYHLQGNFSAAISYYHKALWLKPDDQFCTEMLNVALMDECQNGVDSKVELC.

14 TPR repeats span residues 7–36, 39–64, 72–95, 128–159, 164–187, 194–232, 242–270, 277–304, 309–338, 343–371, 378–406, 411–443, 447–479, and 484–513; these read EKIR…AALT, PSDI…LLNA, LRFR…LLML, ISSA…AIKA, YEAL…LLSS, DGWL…VSGS, DLLA…LLEK, CTLV…LVKD, ALSW…ATGI, SPAR…TAAR, LPTL…AKAI, PLVY…HIPS, ESWE…ALTL, and LSTY…ALWL.

Belongs to the APC6/CDC16 family. The APC/C is composed of at least 10 subunits. In terms of tissue distribution, widely expressed.

It localises to the nucleus. Its pathway is protein modification; protein ubiquitination. Its function is as follows. Component of the anaphase promoting complex/cyclosome (APC/C), a cell cycle-regulated E3 ubiquitin-protein ligase complex that controls progression through mitosis and the G1 phase of the cell cycle. The APC/C complex controls several key steps in the cell cycle by mediating ubiquitination and subsequent degradation of target proteins such as cyclins. The APC/C complex is required for the female gametophyte development and is involved in several aspect of development by controlling cell division and cell elongation. Involved in the control of endoreduplication. In Arabidopsis thaliana (Mouse-ear cress), this protein is Anaphase-promoting complex subunit 6 (APC6).